Consider the following 167-residue polypeptide: MPTFVDPSKCDGCKGGEKTACMYICPNDLMILDPEEMKAFNQEPEACWECYSCIKICPQGAITARPYADFAPMGGTCIPLRGSEDIMWTIKFRNGSVKRFKFPIRTTPEGSIKPFEGKPEAGDLENELLFTETALTVPQVALGQKAQIADAETSQCWFDLPCEGGNR.

2 consecutive 4Fe-4S ferredoxin-type domains span residues Met-1–Glu-35 and Lys-38–Tyr-67. [4Fe-4S] cluster contacts are provided by Cys-10, Cys-13, Cys-21, Cys-25, Cys-47, Cys-50, Cys-53, and Cys-57.

As to quaternary structure, heterodimer composed of AprA and AprB. The heterodimers can dimerize to form heterotetramers. It depends on [4Fe-4S] cluster as a cofactor.

It is found in the cytoplasm. Iron-sulfur cluster subunit of the adenylylsulfate reductase which catalyzes reversibly the reduction of adenosine 5'-phosphosulfate (APS) to sulfite and AMP during dissimilatory sulfate reduction. The iron-sulfur cluster 2 is thought to accept electrons from a still unknown electron donor and transfer electrons to the iron-sulfur cluster 1 of this protein and then onto the FAD of AprA. This Megalodesulfovibrio gigas (strain ATCC 19364 / DSM 1382 / NCIMB 9332 / VKM B-1759) (Desulfovibrio gigas) protein is Adenylylsulfate reductase subunit beta.